Consider the following 489-residue polypeptide: Cobyric acid synthase (489 aa).

Residues arginine 251–alanine 439 form the GATase cobBQ-type domain. Residue cysteine 332 is the Nucleophile of the active site. Histidine 431 is an active-site residue.

This sequence belongs to the CobB/CobQ family. CobQ subfamily.

The protein operates within cofactor biosynthesis; adenosylcobalamin biosynthesis. In terms of biological role, catalyzes amidations at positions B, D, E, and G on adenosylcobyrinic A,C-diamide. NH(2) groups are provided by glutamine, and one molecule of ATP is hydrogenolyzed for each amidation. This Aromatoleum aromaticum (strain DSM 19018 / LMG 30748 / EbN1) (Azoarcus sp. (strain EbN1)) protein is Cobyric acid synthase.